The primary structure comprises 212 residues: Glutathione S-transferase hmp2 (212 aa).

The GST N-terminal domain maps to 1 to 80; sequence MVIKLYGSAM…YLARKYDSGT (80 aa). Glutathione-binding positions include 51–52 and 64–65; these read KV and ES. The GST C-terminal domain occupies 88–212; that stretch reads DHEAYGRFEQ…TWIKATAEAR (125 aa).

Belongs to the GST superfamily.

It carries out the reaction RX + glutathione = an S-substituted glutathione + a halide anion + H(+). It participates in secondary metabolite biosynthesis. Glutathione S-transferase; part of the gene cluster that mediates the biosynthesis of hypothemycin, a resorcylic acid lactone (RAL) that irreversibly inhibits a subset of protein kinases with a conserved cysteine in the ATP binding site such as human ERK2. The first step is performed by both PKSs hmp3 and hmp8 and leads to the production of 7',8'-dehydrozearalenol (DHZ). The highly reducing PKS hpm8 synthesizes the reduced hexaketide (7S,11S,2E,8E)-7,11-dihydroxy-dodeca-2,8-dienoate, which is transferred downstream to the non-reducing PKS hpm3. Hpm3 then extends the reduced hexaketide to a nonaketide, after which regioselective cyclization and macrolactonization affords DHZ. The next step is the conversion of DHZ into aigialomycin C and is performed by the O-methyltransferase hmp5, the FAD-binding monooxygenase hmp7, and the cytochrome P450 monooxygenase hmp1. The wide substrate tolerance of the hmp5 and hmp7 implies that the reactions from DHZ to aigialomycin C can occur in any order. The steps from aigialomycin C to hypothemycin are less well established. The FAD-linked oxidoreductase hmp9 presumably catalyzes oxidation of the C-6' hydroxyl to a ketone. The timing of this oxidation is important, since the resulting enone functional group is a Michael acceptor that can react spontaneously with glutathione, an abundant metabolite in fungal cells. The glutathione S-transferase hmp2 catalyzes cis-trans isomerization of the 7',8' double bond with equilibrium favoring the trans isomer. The hpm6-encoded transporter might preferentially pump hypothemycin out of the cell relative to the trans isomer aigialomycin A. The cis-to-trans isomerization may be coupled with C-4' hydroxylation, since all known hypothemycin analogs containing the enone functional group also have hydroxyl groups at both C-4' and C-5'. This is Glutathione S-transferase hmp2 from Hypomyces subiculosus (Nectria subiculosa).